Consider the following 135-residue polypeptide: MKFAVAVIFTLALAMGVQSSVIPLLSQVAGHGLSYTAVSGPAVVASPWAVPAAHWPAAVNVASWPPAAIHAAAPAVLAAPAPAVVAAHAPSVVVAPVAHSGVYTAQTRGAIHTAPLAGHIQSVASINAAPAPGTL.

Residues 1 to 19 (MKFAVAVIFTLALAMGVQS) form the signal peptide. Repeat copies occupy residues 72–75 (AAPA), 78–81 (AAPA), and 128–131 (AAPA).

In terms of tissue distribution, detected in the epidermis underlying the head and thorax (including legs and wings), but not in the abdominal epidermis of newly eclosed flies.

In terms of biological role, component of the cuticle of the adult fruit fly. Could be involved in thickening of the hard adult cuticle. The sequence is that of Adult cuticle protein 1 (Acp1) from Drosophila melanogaster (Fruit fly).